Here is a 319-residue protein sequence, read N- to C-terminus: Lipoyl synthase (319 aa).

The tract at residues 6–29 (DTVSANPVRPRHPEKAARPDALSP) is disordered. The span at 16 to 29 (RHPEKAARPDALSP) shows a compositional bias: basic and acidic residues. [4Fe-4S] cluster is bound by residues C61, C66, C72, C87, C91, C94, and S300. The region spanning 73–289 (WDKKHATFMI…QTTAYAKGFL (217 aa)) is the Radical SAM core domain.

This sequence belongs to the radical SAM superfamily. Lipoyl synthase family. [4Fe-4S] cluster is required as a cofactor.

Its subcellular location is the cytoplasm. It carries out the reaction [[Fe-S] cluster scaffold protein carrying a second [4Fe-4S](2+) cluster] + N(6)-octanoyl-L-lysyl-[protein] + 2 oxidized [2Fe-2S]-[ferredoxin] + 2 S-adenosyl-L-methionine + 4 H(+) = [[Fe-S] cluster scaffold protein] + N(6)-[(R)-dihydrolipoyl]-L-lysyl-[protein] + 4 Fe(3+) + 2 hydrogen sulfide + 2 5'-deoxyadenosine + 2 L-methionine + 2 reduced [2Fe-2S]-[ferredoxin]. The protein operates within protein modification; protein lipoylation via endogenous pathway; protein N(6)-(lipoyl)lysine from octanoyl-[acyl-carrier-protein]: step 2/2. Functionally, catalyzes the radical-mediated insertion of two sulfur atoms into the C-6 and C-8 positions of the octanoyl moiety bound to the lipoyl domains of lipoate-dependent enzymes, thereby converting the octanoylated domains into lipoylated derivatives. The sequence is that of Lipoyl synthase from Rhodopseudomonas palustris (strain ATCC BAA-98 / CGA009).